The primary structure comprises 1220 residues: DNA-directed RNA polymerase subunit beta (1220 aa).

Belongs to the RNA polymerase beta chain family. As to quaternary structure, the RNAP catalytic core consists of 2 alpha, 1 beta, 1 beta' and 1 omega subunit. When a sigma factor is associated with the core the holoenzyme is formed, which can initiate transcription.

The enzyme catalyses RNA(n) + a ribonucleoside 5'-triphosphate = RNA(n+1) + diphosphate. In terms of biological role, DNA-dependent RNA polymerase catalyzes the transcription of DNA into RNA using the four ribonucleoside triphosphates as substrates. The polypeptide is DNA-directed RNA polymerase subunit beta (Mesomycoplasma hyopneumoniae (strain 7448) (Mycoplasma hyopneumoniae)).